We begin with the raw amino-acid sequence, 314 residues long: Diisopropyl-fluorophosphatase (314 aa).

The Ca(2+) site is built by glutamate 21, asparagine 120, asparagine 175, aspartate 229, aspartate 232, leucine 273, and histidine 274. Histidine 287 functions as the Proton acceptor in the catalytic mechanism.

Monomer. The cofactor is Ca(2+).

The enzyme catalyses diisopropyl fluorophosphate + H2O = diisopropyl phosphate + fluoride + 2 H(+). With respect to regulation, inhibited by chelating agents. Its function is as follows. Biological function and substrate unknown. However, it is capable of acting on phosphorus anhydride bonds (such as phosphorus-halide and phosphorus-cyanide) in organophosphorus compounds (including nerve gases). The protein is Diisopropyl-fluorophosphatase of Loligo vulgaris (Common European squid).